Consider the following 265-residue polypeptide: MTGSVWAIVPAAGRGTRFGGAVPKQYLHAAGQPLMAYTLAALAAHPAVAGIVVAIAPDDADWPGWTAVHAKPVLTCVGGATRAASVLAGLLALPDGVRADDFVLVHDAARPNLALADLDRLLEIGRGDPVGAILAAPVRDTLKRAGDDGGIDGTEPRERLWRALTPQLFRRHQLIRGLTEASAAGVDVTDEAMAIERLGLRPLLVEGAEDNFKVTTPADLARFEFELANRDRGGASREAERSAMPSAATSVFSGARSAASGSEEV.

The segment covering D231–R241 has biased composition (basic and acidic residues). The tract at residues D231–V265 is disordered. Positions S253 to V265 are enriched in low complexity.

It belongs to the IspD/TarI cytidylyltransferase family. IspD subfamily.

It catalyses the reaction 2-C-methyl-D-erythritol 4-phosphate + CTP + H(+) = 4-CDP-2-C-methyl-D-erythritol + diphosphate. The protein operates within isoprenoid biosynthesis; isopentenyl diphosphate biosynthesis via DXP pathway; isopentenyl diphosphate from 1-deoxy-D-xylulose 5-phosphate: step 2/6. In terms of biological role, catalyzes the formation of 4-diphosphocytidyl-2-C-methyl-D-erythritol from CTP and 2-C-methyl-D-erythritol 4-phosphate (MEP). In Xanthomonas campestris pv. campestris (strain 8004), this protein is 2-C-methyl-D-erythritol 4-phosphate cytidylyltransferase.